We begin with the raw amino-acid sequence, 457 residues long: UDP-glycosyltransferase 708C1 (457 aa).

G31 serves as a coordination point for UDP-alpha-D-glucose. The active-site Proton acceptor is H32. H32 provides a ligand contact to an anthocyanidin. T34 lines the UDP-alpha-D-glucose pocket. N94 lines the an anthocyanidin pocket. The active-site Charge relay is D129. T150 contacts UDP-alpha-D-glucose. Residues 279–280 (NR) are UDP. UDP-alpha-D-glucose-binding residues include V341, Q343, H358, W361, N362, S363, and E366. G381 lines the an anthocyanidin pocket. Residues D382 and Q383 each coordinate UDP-alpha-D-glucose.

Belongs to the UDP-glycosyltransferase family. As to expression, expressed in cotyledons. Not detected in flowers, leaves, roots and hypocotyls.

It carries out the reaction a 3'-hydro-2'-hydroxy-beta-oxodihydrochalcone + UDP-alpha-D-glucose = a 3'-(beta-D-glucopyranosyl)-2'-hydroxy-beta-oxodihydrochalcone + UDP + H(+). UDP-glucose-dependent glucosyltransferase catalyzing the C-glucosylation of 2-hydroxyflavanones (2-hydroxynaringenin, 2-hydroxyeriodictyol and 2-hydroxypinocembrin) and phloretin. No activity with flavanones, flavones or flavonols. Exhibits C-glycosylation activity toward 2',4',6'-trihydroxyacetophenone and phloretin using UDP-glucose as sugar donor. Can use UDP-galactose as sugar donor, but catalytic efficiency is 14-fold lower toward UDP-galactose than toward UDP-glucose. The polypeptide is UDP-glycosyltransferase 708C1 (Fagopyrum esculentum (Common buckwheat)).